A 591-amino-acid chain; its full sequence is Metalloendopeptidase OPG085 (591 aa).

Position 41 (His-41) interacts with Zn(2+). Glu-44 is an active-site residue. The Zn(2+) site is built by His-45 and Glu-112.

Belongs to the peptidase M44 family. Zn(2+) is required as a cofactor. Undergoes proteolytic processing during the course of infection. May be cleaved into 46 kDa and 22 kDa products (Potential).

It is found in the virion. Probably involved in maturation of some viral proteins by processing them preferentially at Ala-Gly-|-Ser/Thr/Lys motifs. Does not seem to be responsible for the cleavage of major core proteins. The polypeptide is Metalloendopeptidase OPG085 (OPG085) (Variola virus (isolate Human/India/Ind3/1967) (VARV)).